Reading from the N-terminus, the 194-residue chain is Endoribonuclease YbeY (194 aa).

The Zn(2+) site is built by His151, His155, and His161.

Belongs to the endoribonuclease YbeY family. It depends on Zn(2+) as a cofactor.

The protein resides in the cytoplasm. Functionally, single strand-specific metallo-endoribonuclease involved in late-stage 70S ribosome quality control and in maturation of the 3' terminus of the 16S rRNA. This chain is Endoribonuclease YbeY, found in Gloeobacter violaceus (strain ATCC 29082 / PCC 7421).